The chain runs to 165 residues: Lipoprotein signal peptidase (165 aa).

Helical transmembrane passes span Tyr7–Leu27, Ala46–Leu66, Trp72–Leu92, and Leu100–Val120. Active-site residues include Asp127 and Asp145. Residues Trp136 to Ile156 traverse the membrane as a helical segment.

It belongs to the peptidase A8 family.

It is found in the cell inner membrane. It catalyses the reaction Release of signal peptides from bacterial membrane prolipoproteins. Hydrolyzes -Xaa-Yaa-Zaa-|-(S,diacylglyceryl)Cys-, in which Xaa is hydrophobic (preferably Leu), and Yaa (Ala or Ser) and Zaa (Gly or Ala) have small, neutral side chains.. The protein operates within protein modification; lipoprotein biosynthesis (signal peptide cleavage). This protein specifically catalyzes the removal of signal peptides from prolipoproteins. The polypeptide is Lipoprotein signal peptidase (Janthinobacterium sp. (strain Marseille) (Minibacterium massiliensis)).